The chain runs to 694 residues: Polyribonucleotide nucleotidyltransferase (694 aa).

Residues aspartate 486 and aspartate 492 each contribute to the Mg(2+) site. The KH domain maps to 553-612; sequence PRIETMQIKPTKIASVIGPGGKQIRQIIEETGVQIDVNDLGVVSISASSASAINKAKEII. One can recognise an S1 motif domain in the interval 622–690; the sequence is GKTYRGRVTS…EKGQLKLSHK (69 aa).

The protein belongs to the polyribonucleotide nucleotidyltransferase family. Mg(2+) serves as cofactor.

It is found in the cytoplasm. It carries out the reaction RNA(n+1) + phosphate = RNA(n) + a ribonucleoside 5'-diphosphate. Involved in mRNA degradation. Catalyzes the phosphorolysis of single-stranded polyribonucleotides processively in the 3'- to 5'-direction. This chain is Polyribonucleotide nucleotidyltransferase, found in Chlamydia pneumoniae (Chlamydophila pneumoniae).